The sequence spans 714 residues: Putative glutamine--fructose-6-phosphate aminotransferase [isomerizing] (714 aa).

The active-site Nucleophile; for GATase activity is the Cys-2. The region spanning 2-321 (CGIFGYCNFL…DNDIAHIYDG (320 aa)) is the Glutamine amidotransferase type-2 domain. A compositionally biased stretch (polar residues) spans 266–280 (STTSTFNHGSSTETP). The tract at residues 266-285 (STTSTFNHGSSTETPAENGL) is disordered. 2 SIS domains span residues 387–526 (WLTE…DLVS) and 559–704 (CDKK…VDLP).

The catalysed reaction is D-fructose 6-phosphate + L-glutamine = D-glucosamine 6-phosphate + L-glutamate. It functions in the pathway nucleotide-sugar biosynthesis; UDP-N-acetyl-alpha-D-glucosamine biosynthesis; alpha-D-glucosamine 6-phosphate from D-fructose 6-phosphate: step 1/1. In terms of biological role, involved in amino sugar synthesis (formation of chitin, supplies the amino sugars of asparagine-linked oligosaccharides of glycoproteins). In Saccharomyces cerevisiae (strain YJM789) (Baker's yeast), this protein is Putative glutamine--fructose-6-phosphate aminotransferase [isomerizing].